Here is a 149-residue protein sequence, read N- to C-terminus: MHSREAIEAYYRAVGTRMAGLPVYNPALAVELLGWRAVEGVGALGVLITPWCMNLFWQPPAEAELPTKGERAVLSLPSGDYECTLHEDESLGRYASASLCSPMQDFPDQAGARAMAEEVLRLVFAESEPPQPAQLTRRALFRRALGGAS.

Belongs to the HupJ family.

This chain is Hydrogenase expression/formation protein HupT (hupT), found in Azotobacter chroococcum mcd 1.